The sequence spans 317 residues: tRNA pseudouridine synthase B (317 aa).

Aspartate 47 (nucleophile) is an active-site residue.

It belongs to the pseudouridine synthase TruB family. Type 1 subfamily.

The enzyme catalyses uridine(55) in tRNA = pseudouridine(55) in tRNA. Functionally, responsible for synthesis of pseudouridine from uracil-55 in the psi GC loop of transfer RNAs. This is tRNA pseudouridine synthase B from Shewanella sp. (strain ANA-3).